Consider the following 210-residue polypeptide: Somatotropin (210 aa).

The signal sequence occupies residues 1–23; that stretch reads MARALVLLSVVLVSLLVNQGTAS. Zn(2+) is bound at residue histidine 38. Cysteine 71 and cysteine 183 are disulfide-bonded. Glutamate 192 serves as a coordination point for Zn(2+). The cysteines at positions 200 and 208 are disulfide-linked.

Belongs to the somatotropin/prolactin family.

It is found in the secreted. Its function is as follows. Growth hormone plays an important role in growth control. The sequence is that of Somatotropin (gh) from Ctenopharyngodon idella (Grass carp).